Consider the following 95-residue polypeptide: Alpha-bungarotoxin, isoform A31 (95 aa).

The first 21 residues, 1-21, serve as a signal peptide directing secretion; it reads MKTLLLTLVVVTIVCLDLGYT. 5 cysteine pairs are disulfide-bonded: Cys24–Cys44, Cys37–Cys65, Cys50–Cys54, Cys69–Cys80, and Cys81–Cys86.

The protein belongs to the three-finger toxin family. Long-chain subfamily. Type II alpha-neurotoxin sub-subfamily. Monomer in solution, homodimer in crystal state. In terms of tissue distribution, expressed by the venom gland.

The protein localises to the secreted. In terms of biological role, binds with high affinity to muscular (tested on Torpedo marmorata, Kd=0.4 nM) and neuronal (tested on chimeric alpha-7/CHRNA7, Kd=0.95 nM) nicotinic acetylcholine receptor (nAChR) and inhibits acetylcholine from binding to the receptor, thereby impairing neuromuscular and neuronal transmission. It also shows an activity on GABA(A) receptors. It antagonises GABA-activated currents with high potency when tested on primary hippocampal neurons. It inhibits recombinantly expressed GABA(A) receptors composed of alpha-2-beta-2-gamma-2 (GABRA2-GABRB2-GABRG2) subunits with high potency (62.3% inhibition at 20 uM of toxin). It also shows a weaker inhibition on GABA(A) receptors composed of alpha-1-beta-2-gamma-2 (GABRA1-GABRB2-GABRG2) subunits, alpha-4-beta-2-gamma-2 (GABRA4-GABRB2-GABRG2) subunits, and alpha-5-beta-2-gamma-2 (GABRA5-GABRB2-GABRG2) subunits. A very weak inhibition is also observed on GABA(A) receptor composed of alpha-1-beta-3-gamma-2 (GABRA1-GABRB3-GABRG2). It has also been shown to bind and inhibit recombinant GABA(A) receptor beta-3/GABRB3 subunit (Kd=about 50 nM). In addition, it blocks the extracellular increase of dopamine evoked by nicotine only at the higher dose (4.2 uM). In vivo, when intraperitoneally injected into mice, induces flaccid paralysis of the limbs and respiratory distress, and causes death in a dose-dependent manner. The protein is Alpha-bungarotoxin, isoform A31 of Bungarus candidus (Malayan krait).